We begin with the raw amino-acid sequence, 466 residues long: Sulfate adenylyltransferase subunit 1 (466 aa).

In terms of domain architecture, tr-type G spans 22–237 (KELVRFLTCG…LNTIDVKTQE (216 aa)). The segment at 31–38 (GSVDDGKS) is G1. 31–38 (GSVDDGKS) is a GTP binding site. The G2 stretch occupies residues 89–93 (GITID). The G3 stretch occupies residues 110–113 (DTPG). Residues 110–114 (DTPGH) and 165–168 (NKMD) each bind GTP. Positions 165 to 168 (NKMD) are G4. Residues 202–204 (SAL) form a G5 region.

Belongs to the TRAFAC class translation factor GTPase superfamily. Classic translation factor GTPase family. CysN/NodQ subfamily. In terms of assembly, heterodimer composed of CysD, the smaller subunit, and CysN.

The catalysed reaction is sulfate + ATP + H(+) = adenosine 5'-phosphosulfate + diphosphate. It participates in sulfur metabolism; hydrogen sulfide biosynthesis; sulfite from sulfate: step 1/3. Functionally, with CysD forms the ATP sulfurylase (ATPS) that catalyzes the adenylation of sulfate producing adenosine 5'-phosphosulfate (APS) and diphosphate, the first enzymatic step in sulfur assimilation pathway. APS synthesis involves the formation of a high-energy phosphoric-sulfuric acid anhydride bond driven by GTP hydrolysis by CysN coupled to ATP hydrolysis by CysD. The sequence is that of Sulfate adenylyltransferase subunit 1 from Colwellia psychrerythraea (strain 34H / ATCC BAA-681) (Vibrio psychroerythus).